The chain runs to 338 residues: Homocysteine S-methyltransferase 3 (338 aa).

Residues 12–326 (AVRRWVDAAG…NTIRAIHRTL (315 aa)) form the Hcy-binding domain. Residues Cys244, Cys311, and Cys312 each coordinate Zn(2+).

Monomer. Requires Zn(2+) as cofactor.

The catalysed reaction is S-methyl-L-methionine + L-homocysteine = 2 L-methionine + H(+). In terms of biological role, catalyzes methyl transfer from S-methylmethionine (SMM) to adenosyl-L-homocysteine (AdoMet). SMM degradation (by HMT-1, HMT-2, HMT-3 and HMT-4) and biosynthesis (by MMT1) constitute the SMM cycle in plants, which is probably required to achieve short term control of AdoMet level. The sequence is that of Homocysteine S-methyltransferase 3 (HMT-3) from Zea mays (Maize).